Reading from the N-terminus, the 728-residue chain is 1,4-alpha-glucan branching enzyme GlgB (728 aa).

Aspartate 405 (nucleophile) is an active-site residue. The Proton donor role is filled by glutamate 458.

This sequence belongs to the glycosyl hydrolase 13 family. GlgB subfamily. As to quaternary structure, monomer.

It catalyses the reaction Transfers a segment of a (1-&gt;4)-alpha-D-glucan chain to a primary hydroxy group in a similar glucan chain.. Its pathway is glycan biosynthesis; glycogen biosynthesis. Functionally, catalyzes the formation of the alpha-1,6-glucosidic linkages in glycogen by scission of a 1,4-alpha-linked oligosaccharide from growing alpha-1,4-glucan chains and the subsequent attachment of the oligosaccharide to the alpha-1,6 position. The sequence is that of 1,4-alpha-glucan branching enzyme GlgB from Salmonella paratyphi B (strain ATCC BAA-1250 / SPB7).